Consider the following 148-residue polypeptide: SsrA-binding protein (148 aa).

This sequence belongs to the SmpB family.

Its subcellular location is the cytoplasm. Required for rescue of stalled ribosomes mediated by trans-translation. Binds to transfer-messenger RNA (tmRNA), required for stable association of tmRNA with ribosomes. tmRNA and SmpB together mimic tRNA shape, replacing the anticodon stem-loop with SmpB. tmRNA is encoded by the ssrA gene; the 2 termini fold to resemble tRNA(Ala) and it encodes a 'tag peptide', a short internal open reading frame. During trans-translation Ala-aminoacylated tmRNA acts like a tRNA, entering the A-site of stalled ribosomes, displacing the stalled mRNA. The ribosome then switches to translate the ORF on the tmRNA; the nascent peptide is terminated with the 'tag peptide' encoded by the tmRNA and targeted for degradation. The ribosome is freed to recommence translation, which seems to be the essential function of trans-translation. This chain is SsrA-binding protein, found in Mycoplasma mycoides subsp. mycoides SC (strain CCUG 32753 / NCTC 10114 / PG1).